We begin with the raw amino-acid sequence, 3054 residues long: Genome polyprotein (3054 aa).

A Peptidase S30 domain is found at 163–304 (FLPATSLSNV…FAVCHSMTHY (142 aa)). Residues His-214, Asp-223, and Ser-256 each act as for P1 proteinase activity in the active site. An Involved in interaction with stylet and aphid transmission motif is present at residues 358 to 361 (KITC). Positions 615-617 (PTK) match the Involved in virions binding and aphid transmission motif. The region spanning 641–763 (MYIANEGYCY…ESEMKTYNVG (123 aa)) is the Peptidase C6 domain. Active-site for helper component proteinase activity residues include Cys-649 and His-722. One can recognise a Helicase ATP-binding domain in the interval 1234-1386 (EISHSPARDF…TQFPVKLKIE (153 aa)). 1247–1254 (GAVGSGKS) is an ATP binding site. Positions 1336–1339 (DECH) match the DECH box motif. The Helicase C-terminal domain maps to 1401–1564 (GANADVISCG…NLPVTTQSVS (164 aa)). Positions 1889–1896 (NKGKRKGT) match the Nuclear localization signal motif. Tyr-1911 carries the post-translational modification O-(5'-phospho-RNA)-tyrosine. Residues 2038–2255 (GESLFKGPRD…VLWGGHKVFM (218 aa)) form the Peptidase C4 domain. Residues His-2083, Asp-2118, and Cys-2188 each act as for nuclear inclusion protein A activity in the active site. Positions 2521–2641 (WVYCDADGSQ…AIHPDKAERL (121 aa)) constitute a RdRp catalytic domain. Residues 2798 to 2827 (GADAGKKKDQKDDKVAEQASKDRDVNAGTS) form a disordered region. The segment covering 2801-2822 (AGKKKDQKDDKVAEQASKDRDV) has biased composition (basic and acidic residues). Thr-3038 is modified (phosphothreonine).

It belongs to the potyviridae genome polyprotein family. As to quaternary structure, interacts with host eIF4E protein (via cap-binding region); this interaction mediates the translation of the VPg-viral RNA conjugates. Part of a complex that comprises VPg, RNA, host EIF4E and EIF4G; this interaction mediates the translation of the VPg-viral RNA conjugates. Interaction is possible in susceptible hosts but impaired in resistant plants: the VPg of strain HAT interacts with tomato eIF4E1 and eIF4E2 as well as with Capsicum annuum eIF4E1 susceptible alleles pvr2(+), pvr2(3) and pvr2(9) but not with the resistant allele pvr2(2), the VPg of strain CAA10 interacts with C.annuum eIF4E1 susceptible alleles pvr2(+), pvr2(2), pvr2(3) and pvr2(9), the VPg of strain NW interacts at least with C.annuum eIF4E1. In terms of assembly, homodimer; disulfide-linked. VPg is uridylylated by the polymerase and is covalently attached to the 5'-end of the genomic RNA. This uridylylated form acts as a nucleotide-peptide primer for the polymerase. In terms of processing, potyviral RNA is expressed as two polyproteins which undergo post-translational proteolytic processing. Genome polyprotein is processed by NIa-pro, P1 and HC-pro proteinases resulting in the production of at least ten individual proteins. P3N-PIPO polyprotein is cleaved by P1 and HC-pro proteinases resulting in the production of three individual proteins. The P1 proteinase and the HC-pro cleave only their respective C-termini autocatalytically. 6K1 is essential for proper proteolytic separation of P3 from CI.

The protein resides in the host cytoplasmic vesicle. Its subcellular location is the host nucleus. It is found in the virion. The catalysed reaction is RNA(n) + a ribonucleoside 5'-triphosphate = RNA(n+1) + diphosphate. The enzyme catalyses Hydrolyzes glutaminyl bonds, and activity is further restricted by preferences for the amino acids in P6 - P1' that vary with the species of potyvirus, e.g. Glu-Xaa-Xaa-Tyr-Xaa-Gln-|-(Ser or Gly) for the enzyme from tobacco etch virus. The natural substrate is the viral polyprotein, but other proteins and oligopeptides containing the appropriate consensus sequence are also cleaved.. It carries out the reaction Hydrolyzes a Gly-|-Gly bond at its own C-terminus, commonly in the sequence -Tyr-Xaa-Val-Gly-|-Gly, in the processing of the potyviral polyprotein.. Functionally, required for aphid transmission and also has proteolytic activity. Only cleaves a Gly-Gly dipeptide at its own C-terminus. Interacts with virions and aphid stylets. Acts as a suppressor of RNA-mediated gene silencing, also known as post-transcriptional gene silencing (PTGS), a mechanism of plant viral defense that limits the accumulation of viral RNAs. May have RNA-binding activity. Its function is as follows. Has helicase activity. It may be involved in replication. Indispensable for virus replication. Reduces the abundance of host transcripts related to jasmonic acid biosynthesis therefore altering the host defenses. In order to increase its own stability, decreases host protein degradation pathways. In terms of biological role, indispensable for virus replication. Functionally, mediates the cap-independent, EIF4E-dependent translation of viral genomic RNAs. Binds to the cap-binding site of host EIF4E and thus interferes with the host EIF4E-dependent mRNA export and translation. VPg-RNA directly binds EIF4E and is a template for transcription. Also forms trimeric complexes with EIF4E-EIF4G, which are templates for translation. Its function is as follows. Has RNA-binding and proteolytic activities. An RNA-dependent RNA polymerase that plays an essential role in the virus replication. In terms of biological role, involved in aphid transmission, cell-to-cell and systemis movement, encapsidation of the viral RNA and in the regulation of viral RNA amplification. In Capsicum annuum (Capsicum pepper), this protein is Genome polyprotein.